Reading from the N-terminus, the 129-residue chain is Large ribosomal subunit protein bL21 (129 aa).

The disordered stretch occupies residues 100-129 (DGAKPSKKAAEKKAPKAAPKKAAAKAESAE).

The protein belongs to the bacterial ribosomal protein bL21 family. As to quaternary structure, part of the 50S ribosomal subunit. Contacts protein L20.

Functionally, this protein binds to 23S rRNA in the presence of protein L20. This Brucella anthropi (strain ATCC 49188 / DSM 6882 / CCUG 24695 / JCM 21032 / LMG 3331 / NBRC 15819 / NCTC 12168 / Alc 37) (Ochrobactrum anthropi) protein is Large ribosomal subunit protein bL21.